We begin with the raw amino-acid sequence, 211 residues long: Thiamine-phosphate synthase (211 aa).

4-amino-2-methyl-5-(diphosphooxymethyl)pyrimidine is bound by residues 37–41 (QLRIK) and asparagine 69. Residues aspartate 70 and aspartate 89 each coordinate Mg(2+). Serine 108 provides a ligand contact to 4-amino-2-methyl-5-(diphosphooxymethyl)pyrimidine. 134–136 (TQT) contributes to the 2-[(2R,5Z)-2-carboxy-4-methylthiazol-5(2H)-ylidene]ethyl phosphate binding site. Lysine 137 is a 4-amino-2-methyl-5-(diphosphooxymethyl)pyrimidine binding site. 2-[(2R,5Z)-2-carboxy-4-methylthiazol-5(2H)-ylidene]ethyl phosphate-binding positions include glycine 166 and 186–187 (VS).

It belongs to the thiamine-phosphate synthase family. Mg(2+) serves as cofactor.

It catalyses the reaction 2-[(2R,5Z)-2-carboxy-4-methylthiazol-5(2H)-ylidene]ethyl phosphate + 4-amino-2-methyl-5-(diphosphooxymethyl)pyrimidine + 2 H(+) = thiamine phosphate + CO2 + diphosphate. The catalysed reaction is 2-(2-carboxy-4-methylthiazol-5-yl)ethyl phosphate + 4-amino-2-methyl-5-(diphosphooxymethyl)pyrimidine + 2 H(+) = thiamine phosphate + CO2 + diphosphate. It carries out the reaction 4-methyl-5-(2-phosphooxyethyl)-thiazole + 4-amino-2-methyl-5-(diphosphooxymethyl)pyrimidine + H(+) = thiamine phosphate + diphosphate. It functions in the pathway cofactor biosynthesis; thiamine diphosphate biosynthesis; thiamine phosphate from 4-amino-2-methyl-5-diphosphomethylpyrimidine and 4-methyl-5-(2-phosphoethyl)-thiazole: step 1/1. In terms of biological role, condenses 4-methyl-5-(beta-hydroxyethyl)thiazole monophosphate (THZ-P) and 2-methyl-4-amino-5-hydroxymethyl pyrimidine pyrophosphate (HMP-PP) to form thiamine monophosphate (TMP). The sequence is that of Thiamine-phosphate synthase from Salmonella schwarzengrund (strain CVM19633).